Consider the following 198-residue polypeptide: Na(+)-translocating NADH-quinone reductase subunit E (198 aa).

6 helical membrane passes run 11-31 (SVFI…FLAV), 35-55 (VSTA…AVPA), 77-97 (FLNF…LEMI), 110-130 (GIFL…SFMV), 140-160 (VVYG…LAGL), and 176-196 (LGIT…FSGI).

This sequence belongs to the NqrDE/RnfAE family. As to quaternary structure, composed of six subunits; NqrA, NqrB, NqrC, NqrD, NqrE and NqrF.

It is found in the cell inner membrane. The catalysed reaction is a ubiquinone + n Na(+)(in) + NADH + H(+) = a ubiquinol + n Na(+)(out) + NAD(+). Functionally, NQR complex catalyzes the reduction of ubiquinone-1 to ubiquinol by two successive reactions, coupled with the transport of Na(+) ions from the cytoplasm to the periplasm. NqrA to NqrE are probably involved in the second step, the conversion of ubisemiquinone to ubiquinol. This is Na(+)-translocating NADH-quinone reductase subunit E from Actinobacillus pleuropneumoniae serotype 5b (strain L20).